Here is a 185-residue protein sequence, read N- to C-terminus: Elongation factor P (185 aa).

The protein belongs to the elongation factor P family.

It is found in the cytoplasm. It functions in the pathway protein biosynthesis; polypeptide chain elongation. In terms of biological role, involved in peptide bond synthesis. Stimulates efficient translation and peptide-bond synthesis on native or reconstituted 70S ribosomes in vitro. Probably functions indirectly by altering the affinity of the ribosome for aminoacyl-tRNA, thus increasing their reactivity as acceptors for peptidyl transferase. The sequence is that of Elongation factor P from Nitrosomonas europaea (strain ATCC 19718 / CIP 103999 / KCTC 2705 / NBRC 14298).